A 306-amino-acid chain; its full sequence is UDP-3-O-acyl-N-acetylglucosamine deacetylase (306 aa).

3 residues coordinate Zn(2+): His79, His238, and Asp242. Residue His265 is the Proton donor of the active site.

Belongs to the LpxC family. The cofactor is Zn(2+).

The enzyme catalyses a UDP-3-O-[(3R)-3-hydroxyacyl]-N-acetyl-alpha-D-glucosamine + H2O = a UDP-3-O-[(3R)-3-hydroxyacyl]-alpha-D-glucosamine + acetate. It participates in glycolipid biosynthesis; lipid IV(A) biosynthesis; lipid IV(A) from (3R)-3-hydroxytetradecanoyl-[acyl-carrier-protein] and UDP-N-acetyl-alpha-D-glucosamine: step 2/6. Functionally, catalyzes the hydrolysis of UDP-3-O-myristoyl-N-acetylglucosamine to form UDP-3-O-myristoylglucosamine and acetate, the committed step in lipid A biosynthesis. The polypeptide is UDP-3-O-acyl-N-acetylglucosamine deacetylase (Shewanella piezotolerans (strain WP3 / JCM 13877)).